The chain runs to 340 residues: NADH-quinone oxidoreductase subunit H (340 aa).

Transmembrane regions (helical) follow at residues 4–24 (TIGI…PLLI), 78–98 (YLFV…WAVI), 113–133 (VLYL…AGWA), 151–171 (VSYE…AGSM), 184–204 (MLHW…ISGI), 244–264 (SMIL…LSPF), 273–293 (IFFI…FLFV), and 316–336 (VLIP…VAHV).

Belongs to the complex I subunit 1 family. NDH-1 is composed of 14 different subunits. Subunits NuoA, H, J, K, L, M, N constitute the membrane sector of the complex.

The protein localises to the cell inner membrane. The enzyme catalyses a quinone + NADH + 5 H(+)(in) = a quinol + NAD(+) + 4 H(+)(out). In terms of biological role, NDH-1 shuttles electrons from NADH, via FMN and iron-sulfur (Fe-S) centers, to quinones in the respiratory chain. The immediate electron acceptor for the enzyme in this species is believed to be ubiquinone. Couples the redox reaction to proton translocation (for every two electrons transferred, four hydrogen ions are translocated across the cytoplasmic membrane), and thus conserves the redox energy in a proton gradient. This subunit may bind ubiquinone. This Legionella pneumophila (strain Lens) protein is NADH-quinone oxidoreductase subunit H.